Consider the following 139-residue polypeptide: MRGSTQGCSPTGREAIVLDTGAFIAGKAAALPGRLATPPRVLEEVRDRGSRSLLELLQSTGRLEVLAPSTRALERAREEARRAGVLGRLSGADLEVLALALDLAWQGCRVAVATDDYTLQRLAARLGLGVVRLRYRGAV.

The PINc domain occupies 14 to 121; that stretch reads EAIVLDTGAF…VATDDYTLQR (108 aa). A Mg(2+)-binding site is contributed by D19.

This sequence belongs to the PINc/VapC protein family. Mg(2+) serves as cofactor.

Its function is as follows. Toxic component of a type II toxin-antitoxin (TA) system. An RNase. In Aeropyrum pernix (strain ATCC 700893 / DSM 11879 / JCM 9820 / NBRC 100138 / K1), this protein is Ribonuclease VapC3.